The chain runs to 1343 residues: DNA-directed RNA polymerase subunit beta (1343 aa).

It belongs to the RNA polymerase beta chain family. As to quaternary structure, the RNAP catalytic core consists of 2 alpha, 1 beta, 1 beta' and 1 omega subunit. When a sigma factor is associated with the core the holoenzyme is formed, which can initiate transcription.

The enzyme catalyses RNA(n) + a ribonucleoside 5'-triphosphate = RNA(n+1) + diphosphate. In terms of biological role, DNA-dependent RNA polymerase catalyzes the transcription of DNA into RNA using the four ribonucleoside triphosphates as substrates. This chain is DNA-directed RNA polymerase subunit beta, found in Shewanella piezotolerans (strain WP3 / JCM 13877).